The primary structure comprises 229 residues: LexA repressor (229 aa).

The segment at residues 26 to 46 is a DNA-binding region (H-T-H motif); that stretch reads FDEMKEALDLASKSGIHRLIT. Active-site for autocatalytic cleavage activity residues include Ser149 and Lys187.

The protein belongs to the peptidase S24 family. In terms of assembly, homodimer.

The catalysed reaction is Hydrolysis of Ala-|-Gly bond in repressor LexA.. In terms of biological role, represses a number of genes involved in the response to DNA damage (SOS response), including recA and lexA. In the presence of single-stranded DNA, RecA interacts with LexA causing an autocatalytic cleavage which disrupts the DNA-binding part of LexA, leading to derepression of the SOS regulon and eventually DNA repair. The chain is LexA repressor from Phenylobacterium zucineum (strain HLK1).